The following is a 155-amino-acid chain: Small ribosomal subunit protein bS16 (155 aa).

The disordered stretch occupies residues 100-155; sequence EAGIPDPAPSTEEPAAVCEASAEMAGQPGEVEPAGAAAEPNSQEPEPEEEKPQVEA. The span at 124–143 shows a compositional bias: low complexity; it reads AGQPGEVEPAGAAAEPNSQE.

The protein belongs to the bacterial ribosomal protein bS16 family.

This is Small ribosomal subunit protein bS16 from Synechococcus sp. (strain JA-3-3Ab) (Cyanobacteria bacterium Yellowstone A-Prime).